We begin with the raw amino-acid sequence, 358 residues long: Heme A synthase (358 aa).

The next 8 membrane-spanning stretches (helical) occupy residues 22–42 (IQVWLYSILLLCLAIVLVGGA), 107–127 (VLGRLVGLVALLGLIWFWAIK), 133–153 (VLLQLIIVPILIAFQGVVGWW), 172–192 (LAFHLITACFVIIFVTYLSQG), 208–228 (FAGWLVVLILIEVYFGALVAG), 269–289 (FVHRFFAYILFFVAIIHAFYV), 302–322 (AFFICVMIAVQALLGIITLLQ), and 324–344 (VPISLGLIHQSVALAILCFSV). Position 271 (H271) interacts with heme. Residue H332 participates in heme binding.

Belongs to the COX15/CtaA family. Type 2 subfamily. Interacts with CtaB. The cofactor is heme b.

The protein resides in the cell membrane. It carries out the reaction Fe(II)-heme o + 2 A + H2O = Fe(II)-heme a + 2 AH2. Its pathway is porphyrin-containing compound metabolism; heme A biosynthesis; heme A from heme O: step 1/1. In terms of biological role, catalyzes the conversion of heme O to heme A by two successive hydroxylations of the methyl group at C8. The first hydroxylation forms heme I, the second hydroxylation results in an unstable dihydroxymethyl group, which spontaneously dehydrates, resulting in the formyl group of heme A. The polypeptide is Heme A synthase (Bartonella henselae (strain ATCC 49882 / DSM 28221 / CCUG 30454 / Houston 1) (Rochalimaea henselae)).